Consider the following 417-residue polypeptide: Inner membrane transport protein YnfM (417 aa).

Positions 1–22 are disordered; that stretch reads MSRTTTVDGAPASDTDKQSISQ. Topologically, residues 1 to 38 are periplasmic; the sequence is MSRTTTVDGAPASDTDKQSISQPNQFIKRGTPQFMRVT. Residues 39-59 traverse the membrane as a helical segment; sequence LALFSAGLATFALLYCVQPIL. Topologically, residues 60–73 are cytoplasmic; it reads PVLSQEFGLTPANS. A helical membrane pass occupies residues 74–94; the sequence is SISLSISTAMLAIGLLFTGPL. The Periplasmic portion of the chain corresponds to 95–101; that stretch reads SDAIGRK. The helical transmembrane segment at 102-122 threads the bilayer; the sequence is PVMVTALLLASICTLLSTMMT. At 123-125 the chain is on the cytoplasmic side; it reads SWH. The helical transmembrane segment at 126-146 threads the bilayer; that stretch reads GILIMRALIGLSLSGVAAVGM. Topologically, residues 147-152 are periplasmic; the sequence is TYLSEE. A helical membrane pass occupies residues 153-173; it reads IHPSFVAFSMGLYISGNSIGG. Residues 174 to 190 lie on the Cytoplasmic side of the membrane; sequence MSGRLISGVFTDFFNWR. The helical transmembrane segment at 191–211 threads the bilayer; it reads IALAAIGCFALASALMFWKIL. Topologically, residues 212–241 are periplasmic; that stretch reads PESRHFRPTSLRPKTLFINFRLHWRDRGLP. Residues 242-262 form a helical membrane-spanning segment; the sequence is LLFAEGFLLMGSFVTLFNYIG. The Cytoplasmic portion of the chain corresponds to 263 to 264; it reads YR. A helical transmembrane segment spans residues 265–285; that stretch reads LMLSPWHVSQAVVGLLSLAYL. At 286-315 the chain is on the periplasmic side; sequence TGTWSSPKAGTMTTRYGRGPVMLFSTGVML. A helical transmembrane segment spans residues 316-336; the sequence is FGLLMTLFSSLWLIFAGMLLF. The Cytoplasmic segment spans residues 337–364; sequence SAGFFAAHSVASSWIGPRAKRAKGQASS. The helical transmembrane segment at 365–385 threads the bilayer; the sequence is LYLFSYYLGSSIAGTLGGVFW. The Periplasmic segment spans residues 386–387; the sequence is HN. A helical transmembrane segment spans residues 388-408; sequence YGWNGVGAFIALMLVIALLVG. At 409–417 the chain is on the cytoplasmic side; that stretch reads TRLHRRLHA.

This sequence belongs to the major facilitator superfamily.

It is found in the cell inner membrane. The sequence is that of Inner membrane transport protein YnfM (ynfM) from Escherichia coli (strain K12).